The primary structure comprises 258 residues: Redox-sensing transcriptional repressor Rex (258 aa).

The H-T-H motif DNA-binding region spans 26-65; it reads LYLRALTALSERSVPTVSSEELAAAAGVNSAKLRKDFSYL. Residue 100–105 participates in NAD(+) binding; the sequence is GIGNLG. The segment at 219 to 258 is disordered; that stretch reads AGEEAAADGAAPPVAARKQQRSTGSADQGPDGDVPAVMPA. Residues 225 to 234 show a composition bias toward low complexity; it reads ADGAAPPVAA.

This sequence belongs to the transcriptional regulatory Rex family. As to quaternary structure, homodimer.

It is found in the cytoplasm. Functionally, modulates transcription of respiratory genes in response to changes in cellular NADH/NAD(+) redox state. Binds to the DNA sequence motif 5'-TGTGAACGCGTTCACA-3' in the promoter of the cydABCD operon. May play a general role as a sensor of cellular redox balance. The sequence is that of Redox-sensing transcriptional repressor Rex from Streptomyces coelicolor (strain ATCC BAA-471 / A3(2) / M145).